Reading from the N-terminus, the 651-residue chain is Endoplasmic reticulum chaperone BiP (651 aa).

Positions 1–20 (MGLSTYVGIFLLCILTLSRC) are cleaved as a signal peptide. ATP contacts are provided by residues 36 to 39 (GTTY), lysine 96, 226 to 228 (GGT), 292 to 299 (EKAKRTLS), and 363 to 366 (GSTR). The tract at residues 125 to 279 (KPYMKVQVGS…KKKEGKDITK (155 aa)) is nucleotide-binding (NBD). Residues 399 to 499 (VQAGVISGVE…PRGLPQIEVT (101 aa)) are substrate-binding (SBD). The Prevents secretion from ER signature appears at 648–651 (KEEL).

This sequence belongs to the heat shock protein 70 family.

It localises to the endoplasmic reticulum lumen. It carries out the reaction ATP + H2O = ADP + phosphate + H(+). With respect to regulation, the chaperone activity is regulated by ATP-induced allosteric coupling of the nucleotide-binding (NBD) and substrate-binding (SBD) domains. In the ADP-bound and nucleotide-free (apo) states, the two domains have little interaction. In contrast, in the ATP-bound state the two domains are tightly coupled, which results in drastically accelerated kinetics in both binding and release of polypeptide substrates. J domain-containing co-chaperones stimulate the ATPase activity and are required for efficient substrate recognition. Endoplasmic reticulum chaperone that plays a key role in protein folding and quality control in the endoplasmic reticulum lumen. Involved in the correct folding of proteins and degradation of misfolded proteins. Acts as a key repressor of the unfolded protein response (UPR). This is Endoplasmic reticulum chaperone BiP from Echinococcus granulosus (Hydatid tapeworm).